The sequence spans 467 residues: UDP-N-acetylmuramate--L-alanine ligase (467 aa).

Residue 114 to 120 participates in ATP binding; the sequence is GTHGKTT.

Belongs to the MurCDEF family.

It is found in the cytoplasm. The enzyme catalyses UDP-N-acetyl-alpha-D-muramate + L-alanine + ATP = UDP-N-acetyl-alpha-D-muramoyl-L-alanine + ADP + phosphate + H(+). Its pathway is cell wall biogenesis; peptidoglycan biosynthesis. Its function is as follows. Cell wall formation. This chain is UDP-N-acetylmuramate--L-alanine ligase, found in Azorhizobium caulinodans (strain ATCC 43989 / DSM 5975 / JCM 20966 / LMG 6465 / NBRC 14845 / NCIMB 13405 / ORS 571).